A 305-amino-acid chain; its full sequence is Ribosomal RNA small subunit methyltransferase H (305 aa).

S-adenosyl-L-methionine is bound by residues 30 to 32, aspartate 49, phenylalanine 74, aspartate 96, and glutamine 103; that span reads GGH.

The protein belongs to the methyltransferase superfamily. RsmH family.

The protein resides in the cytoplasm. It catalyses the reaction cytidine(1402) in 16S rRNA + S-adenosyl-L-methionine = N(4)-methylcytidine(1402) in 16S rRNA + S-adenosyl-L-homocysteine + H(+). Functionally, specifically methylates the N4 position of cytidine in position 1402 (C1402) of 16S rRNA. The polypeptide is Ribosomal RNA small subunit methyltransferase H (Francisella tularensis subsp. mediasiatica (strain FSC147)).